The following is a 251-amino-acid chain: Imidazole glycerol phosphate synthase subunit HisF (251 aa).

Active-site residues include Asp-11 and Asp-130.

The protein belongs to the HisA/HisF family. Heterodimer of HisH and HisF.

The protein localises to the cytoplasm. It carries out the reaction 5-[(5-phospho-1-deoxy-D-ribulos-1-ylimino)methylamino]-1-(5-phospho-beta-D-ribosyl)imidazole-4-carboxamide + L-glutamine = D-erythro-1-(imidazol-4-yl)glycerol 3-phosphate + 5-amino-1-(5-phospho-beta-D-ribosyl)imidazole-4-carboxamide + L-glutamate + H(+). The protein operates within amino-acid biosynthesis; L-histidine biosynthesis; L-histidine from 5-phospho-alpha-D-ribose 1-diphosphate: step 5/9. Its function is as follows. IGPS catalyzes the conversion of PRFAR and glutamine to IGP, AICAR and glutamate. The HisF subunit catalyzes the cyclization activity that produces IGP and AICAR from PRFAR using the ammonia provided by the HisH subunit. This is Imidazole glycerol phosphate synthase subunit HisF from Thiobacillus denitrificans (strain ATCC 25259 / T1).